Reading from the N-terminus, the 341-residue chain is tRNA N6-adenosine threonylcarbamoyltransferase (341 aa).

Fe cation contacts are provided by His-111 and His-115. Residues 134-138 (LVSGG), Asp-167, Gly-180, and Asn-276 contribute to the substrate site. Asp-304 is a binding site for Fe cation.

Belongs to the KAE1 / TsaD family. Requires Fe(2+) as cofactor.

The protein localises to the cytoplasm. It carries out the reaction L-threonylcarbamoyladenylate + adenosine(37) in tRNA = N(6)-L-threonylcarbamoyladenosine(37) in tRNA + AMP + H(+). Required for the formation of a threonylcarbamoyl group on adenosine at position 37 (t(6)A37) in tRNAs that read codons beginning with adenine. Is involved in the transfer of the threonylcarbamoyl moiety of threonylcarbamoyl-AMP (TC-AMP) to the N6 group of A37, together with TsaE and TsaB. TsaD likely plays a direct catalytic role in this reaction. The protein is tRNA N6-adenosine threonylcarbamoyltransferase of Pseudomonas putida (strain ATCC 700007 / DSM 6899 / JCM 31910 / BCRC 17059 / LMG 24140 / F1).